The primary structure comprises 302 residues: Acetylesterase (302 aa).

The signal sequence occupies residues 1-21 (MGRFLTTTALALLATGGAATA). Residues Asn84 and Asn101 are each glycosylated (N-linked (GlcNAc...) asparagine).

This sequence belongs to the carbohydrate esterase CE16 family.

The protein resides in the secreted. The enzyme catalyses an acetyl ester + H2O = an aliphatic alcohol + acetate + H(+). In terms of biological role, acetyl esterase that acts as an exo-deacetylase. Liberates acetic acid from xylo-oligomers. The sequence is that of Acetylesterase from Thermothelomyces thermophilus (Myceliophthora thermophila).